The following is a 242-amino-acid chain: MRHVAVIIPARYGATRFPGKPLADLAGKPLIAHVVERAQRARGVDVVAVATDDDRIVRAVRAAGGEAILTGPAATGTDRVAEAARKLAPRPEIVVNLQGDEPLIEPEAIEAVIGAMAGGARMATLARPLAEGELERTQVVKVVTRASGDALYFSRAPIPHRRAGGESPLARAHVGIYAFTAEFLETFTALAPGRLEGEEALEQLRALEHGYDIRVADTGYRGFGIDTPDDLERARALLAAGA.

Belongs to the KdsB family.

The protein localises to the cytoplasm. It carries out the reaction 3-deoxy-alpha-D-manno-oct-2-ulosonate + CTP = CMP-3-deoxy-beta-D-manno-octulosonate + diphosphate. It participates in nucleotide-sugar biosynthesis; CMP-3-deoxy-D-manno-octulosonate biosynthesis; CMP-3-deoxy-D-manno-octulosonate from 3-deoxy-D-manno-octulosonate and CTP: step 1/1. It functions in the pathway bacterial outer membrane biogenesis; lipopolysaccharide biosynthesis. Activates KDO (a required 8-carbon sugar) for incorporation into bacterial lipopolysaccharide in Gram-negative bacteria. This chain is 3-deoxy-manno-octulosonate cytidylyltransferase, found in Anaeromyxobacter dehalogenans (strain 2CP-C).